A 465-amino-acid polypeptide reads, in one-letter code: Cysteine--tRNA ligase (465 aa).

Cysteine 27 is a binding site for Zn(2+). A 'HIGH' region motif is present at residues 29–39; sequence PTVYDDAHLGH. Positions 207, 237, and 241 each coordinate Zn(2+). Residues 269–273 carry the 'KMSKS' region motif; the sequence is KMSKS. Lysine 272 is an ATP binding site.

The protein belongs to the class-I aminoacyl-tRNA synthetase family. As to quaternary structure, monomer. Requires Zn(2+) as cofactor.

It is found in the cytoplasm. It carries out the reaction tRNA(Cys) + L-cysteine + ATP = L-cysteinyl-tRNA(Cys) + AMP + diphosphate. In Helicobacter pylori (strain ATCC 700392 / 26695) (Campylobacter pylori), this protein is Cysteine--tRNA ligase (cysS).